The following is a 371-amino-acid chain: 4-hydroxy-3-methylbut-2-en-1-yl diphosphate synthase (flavodoxin) (371 aa).

[4Fe-4S] cluster-binding residues include cysteine 268, cysteine 271, cysteine 303, and glutamate 310.

The protein belongs to the IspG family. [4Fe-4S] cluster is required as a cofactor.

It catalyses the reaction (2E)-4-hydroxy-3-methylbut-2-enyl diphosphate + oxidized [flavodoxin] + H2O + 2 H(+) = 2-C-methyl-D-erythritol 2,4-cyclic diphosphate + reduced [flavodoxin]. The protein operates within isoprenoid biosynthesis; isopentenyl diphosphate biosynthesis via DXP pathway; isopentenyl diphosphate from 1-deoxy-D-xylulose 5-phosphate: step 5/6. In terms of biological role, converts 2C-methyl-D-erythritol 2,4-cyclodiphosphate (ME-2,4cPP) into 1-hydroxy-2-methyl-2-(E)-butenyl 4-diphosphate. This is 4-hydroxy-3-methylbut-2-en-1-yl diphosphate synthase (flavodoxin) from Macrococcus caseolyticus (strain JCSC5402) (Macrococcoides caseolyticum).